Consider the following 246-residue polypeptide: 4-hydroxy-tetrahydrodipicolinate reductase (246 aa).

7–12 (GCSGRM) is an NAD(+) binding site. Arginine 34 serves as a coordination point for NADP(+). NAD(+)-binding positions include 76–78 (ATT) and 102–105 (CPNT). Histidine 135 acts as the Proton donor/acceptor in catalysis. A (S)-2,3,4,5-tetrahydrodipicolinate-binding site is contributed by histidine 136. Lysine 139 (proton donor) is an active-site residue. 145–146 (GT) is a binding site for (S)-2,3,4,5-tetrahydrodipicolinate.

The protein belongs to the DapB family.

It is found in the cytoplasm. It carries out the reaction (S)-2,3,4,5-tetrahydrodipicolinate + NAD(+) + H2O = (2S,4S)-4-hydroxy-2,3,4,5-tetrahydrodipicolinate + NADH + H(+). It catalyses the reaction (S)-2,3,4,5-tetrahydrodipicolinate + NADP(+) + H2O = (2S,4S)-4-hydroxy-2,3,4,5-tetrahydrodipicolinate + NADPH + H(+). The protein operates within amino-acid biosynthesis; L-lysine biosynthesis via DAP pathway; (S)-tetrahydrodipicolinate from L-aspartate: step 4/4. Catalyzes the conversion of 4-hydroxy-tetrahydrodipicolinate (HTPA) to tetrahydrodipicolinate. This chain is 4-hydroxy-tetrahydrodipicolinate reductase, found in Chlamydia felis (strain Fe/C-56) (Chlamydophila felis).